An 89-amino-acid polypeptide reads, in one-letter code: Phosphocarrier protein HPr (89 aa).

The region spanning 2–89 (AKFSAIITDK…TMIDTALIQG (88 aa)) is the HPr domain. Residue histidine 15 is the Pros-phosphohistidine intermediate of the active site. A Phosphoserine; by HPrK/P modification is found at serine 46.

Belongs to the HPr family.

The protein resides in the cytoplasm. Its activity is regulated as follows. Phosphorylation on Ser-46 inhibits the phosphoryl transfer from enzyme I to HPr. Functionally, general (non sugar-specific) component of the phosphoenolpyruvate-dependent sugar phosphotransferase system (sugar PTS). This major carbohydrate active-transport system catalyzes the phosphorylation of incoming sugar substrates concomitantly with their translocation across the cell membrane. The phosphoryl group from phosphoenolpyruvate (PEP) is transferred to the phosphoryl carrier protein HPr by enzyme I. Phospho-HPr then transfers it to the PTS EIIA domain. P-Ser-HPr interacts with the catabolite control protein A (CcpA), forming a complex that binds to DNA at the catabolite response elements cre, operator sites preceding a large number of catabolite-regulated genes. Thus, P-Ser-HPr is a corepressor in carbon catabolite repression (CCR), a mechanism that allows bacteria to coordinate and optimize the utilization of available carbon sources. P-Ser-HPr also plays a role in inducer exclusion, in which it probably interacts with several non-PTS permeases and inhibits their transport activity. The chain is Phosphocarrier protein HPr (ptsH) from Mycoplasma capricolum subsp. capricolum (strain California kid / ATCC 27343 / NCTC 10154).